The primary structure comprises 275 residues: MIQFTKMHGLGNDFMVVDGVTQNVFFSPEQIRRLADRNFGIGFDQLLLVEPPYDPDLDFHYRIFNADGSEVEQCGNGARCFARFVRNKGLTNKNKIRVSTSSGKMTLRLERDGTVTVNMGVPILEPSLIPFKAKKPEKTYLLQTAQQTFLCGAASMGNPHCVLDVEDVASAAVAEIGALLTKHERFPRGVNVGFMQVINSGHIKLRVYERGAAETLACGTGACAAVVVGQIQGKLDQQVRVDLPGGTLTINWEGEGKPLWMTGPAQHVYDGQIQL.

Asn12, Gln45, and Asn65 together coordinate substrate. Cys74 functions as the Proton donor in the catalytic mechanism. Substrate-binding positions include 75 to 76 (GN), Asn158, Asn191, and 209 to 210 (ER). Residue Cys218 is the Proton acceptor of the active site. 219-220 (GT) contributes to the substrate binding site.

It belongs to the diaminopimelate epimerase family. Homodimer.

It is found in the cytoplasm. The enzyme catalyses (2S,6S)-2,6-diaminopimelate = meso-2,6-diaminopimelate. Its pathway is amino-acid biosynthesis; L-lysine biosynthesis via DAP pathway; DL-2,6-diaminopimelate from LL-2,6-diaminopimelate: step 1/1. Functionally, catalyzes the stereoinversion of LL-2,6-diaminopimelate (L,L-DAP) to meso-diaminopimelate (meso-DAP), a precursor of L-lysine and an essential component of the bacterial peptidoglycan. This is Diaminopimelate epimerase from Shewanella putrefaciens (strain CN-32 / ATCC BAA-453).